Reading from the N-terminus, the 148-residue chain is Isotocin-neurophysin IT 2 (148 aa).

Residues 1 to 20 (MSGSMSSVFSLLYLLSVCSA) form the signal peptide. An intrachain disulfide couples cysteine 21 to cysteine 26. Glycine 29 bears the Glycine amide mark. Disulfide bonds link cysteine 42–cysteine 86, cysteine 45–cysteine 59, cysteine 53–cysteine 76, cysteine 60–cysteine 66, cysteine 93–cysteine 105, cysteine 99–cysteine 117, and cysteine 106–cysteine 111.

It belongs to the vasopressin/oxytocin family.

Isotocin causes contraction of smooth muscles. The polypeptide is Isotocin-neurophysin IT 2 (Catostomus commersonii (White sucker)).